The following is a 72-amino-acid chain: uncharacterized protein (72 aa).

Residues Trp-11–Phe-31 traverse the membrane as a helical segment.

The protein localises to the membrane. This is an uncharacterized protein from Saccharomyces cerevisiae (strain ATCC 204508 / S288c) (Baker's yeast).